The chain runs to 2237 residues: Zinc finger protein 318 (2237 aa).

2 stretches are compositionally biased toward low complexity: residues 1-12 and 30-39; these read MYRSGSRSSVSS and GASSGPTRRP. Residues 1–221 form a disordered region; sequence MYRSGSRSSV…DMDRDDLTDD (221 aa). The segment at 1-1114 is interaction with AR; that stretch reads MYRSGSRSSV…THMHNKKHTQ (1114 aa). Residue S40 is modified to Phosphoserine. The span at 53 to 66 shows a compositional bias: basic residues; sequence PARRHRSPSGHRGR. Phosphoserine occurs at positions 69, 109, and 111. The segment covering 140–156 has biased composition (basic and acidic residues); that stretch reads IRGESRADFARDGRGDH. S167 and S205 each carry phosphoserine. A Phosphotyrosine modification is found at Y237. 2 positions are modified to phosphoserine: S239 and S246. A disordered region spans residues 263-350; the sequence is LHRPEFSPQS…SPRFLDPEFR (88 aa). Composition is skewed to basic and acidic residues over residues 274–290 and 297–317; these read CHDE…DKLK and RSEE…EKVH. Residues 321–332 are compositionally biased toward polar residues; that stretch reads GDHSSFTSGTRN. Residues 348 to 376 adopt a coiled-coil conformation; that stretch reads EFRELDLARRKREEEEEQSRSLSQELVGV. A phosphoserine mark is found at S497, S502, S531, and S557. 2 disordered regions span residues 551-612 and 645-732; these read QEKR…ESLE and QERL…TKNS. Residues 560–576 show a composition bias toward acidic residues; it reads DIEDEEKFLYGDEEEDI. Residues K577, K583, K596, and K607 each participate in a glycyl lysine isopeptide (Lys-Gly) (interchain with G-Cter in SUMO2) cross-link. Residues 577–586 show a composition bias toward basic and acidic residues; it reads KSESPLKSLE. Residues 592 to 602 show a composition bias toward polar residues; that stretch reads GTRQKANSLPS. Composition is skewed to basic and acidic residues over residues 658-677 and 692-706; these read SADR…HFSA and RSSD…ETHH. At T865 the chain carries Phosphothreonine. Residues 904–1003 adopt a coiled-coil conformation; the sequence is EKNRASQKQK…SELDKVAQIL (100 aa). 3 stretches are compositionally biased toward basic and acidic residues: residues 945–964, 1013–1037, and 1047–1056; these read QQGE…KDPL, KSSN…EKEL, and KESKMNEKSC. Disordered regions lie at residues 945-966 and 1013-1072; these read QQGE…PLLM and KSSN…TVKQ. At S1032 the chain carries Phosphoserine. Over residues 1058 to 1072 the composition is skewed to polar residues; it reads KSPSSTESLQPTVKQ. Residue S1059 is modified to Phosphoserine. 2 Matrin-type zinc fingers span residues 1085–1119 and 1158–1180; these read AGSH…LDPY and FYCQ…VKGH. Disordered regions lie at residues 1245-1289, 1302-1342, and 1366-1395; these read VKED…KKEP, SWKK…VGKA, and TTST…VSKP. 3 stretches are compositionally biased toward basic and acidic residues: residues 1280-1289, 1304-1313, and 1321-1341; these read QVKEEVKKEP, KKPEKEEEKG, and PKED…EVGK. At S1445 the chain carries Phosphoserine. Disordered regions lie at residues 1449-1497, 1614-1651, 1727-1770, and 1790-1867; these read KVEL…LSAP, HETK…SMSS, TSGS…HCQT, and EVYQ…MTGH. Pro residues predominate over residues 1469–1490; the sequence is LPPPPPPPPPPPPPPPPPPPQA. Residues 1618 to 1639 are compositionally biased toward polar residues; the sequence is LSSSTLANGESSSLPRTESSDF. A compositionally biased stretch (low complexity) spans 1640-1651; it reads SSTCTLNSSMSS. A compositionally biased stretch (basic and acidic residues) spans 1734–1749; it reads DTHKDRPPEGKIRFDL. Positions 1757-1770 are enriched in polar residues; the sequence is TDSTSHLSDTHCQT. Residues 1796-1814 show a composition bias toward basic and acidic residues; that stretch reads GCRESEMKRKTELKGKVAT. Positions 1798–1827 form a coiled coil; sequence RESEMKRKTELKGKVATEEEEEEEEEGANS. Residues 1815 to 1824 are compositionally biased toward acidic residues; that stretch reads EEEEEEEEEG. A compositionally biased stretch (polar residues) spans 1828 to 1840; the sequence is IEDSNSNHGNRNT. S1878, S1908, S1988, S2044, S2054, S2140, S2143, S2194, and S2206 each carry phosphoserine. The tract at residues 2039–2064 is disordered; it reads EGAHSSSNSRNGRITSNSLETGHPVE. Positions 2041–2058 are enriched in polar residues; it reads AHSSSNSRNGRITSNSLE. The interval 2178 to 2237 is disordered; sequence EDNDSALNLVKTPPSGSPSRDQVVGGNVSPREMPEQEAAVDVIPDHTRSNVYNSQDYLNG. Polar residues predominate over residues 2226–2237; it reads SNVYNSQDYLNG.

As to quaternary structure, homodimer. Heterodimer of isoform 1 and isoform 2. Isoform 1 and isoform 2 interact with AR. As to expression, isoform 1 and isoform 2 are highly expressed in testis, moderately expressed in adrenal gland and uterus and faintly expressed in brain, kidney and liver. Isoform 1 is expressed more in adrenal gland, uterus and liver than isoform 2 is. Expression during testicular development of isoform 1 and isoform 2 is restricted to spermatocytes at the pachytene stage of meiotic prophase and to round and elongated spermatids.

It is found in the nucleus. Acts as a transcriptional corepressor for AR-mediated transactivation function. May act as a transcriptional regulator during spermatogenesis and in particular, during meiotic division. Its function is as follows. Acts as a transcriptional coactivator for AR-mediated transactivation function. May act as a transcriptional regulator during spermatogenesis and in particular, during meiotic division. This is Zinc finger protein 318 (Znf318) from Mus musculus (Mouse).